The sequence spans 305 residues: tRNA dimethylallyltransferase (305 aa).

14 to 21 (GPTTSGKT) is a binding site for ATP. Residue 16 to 21 (TTSGKT) coordinates substrate. 3 interaction with substrate tRNA regions span residues 39 to 42 (DSAL), 163 to 167 (QRITR), and 243 to 248 (RCVGYR).

The protein belongs to the IPP transferase family. Monomer. The cofactor is Mg(2+).

It catalyses the reaction adenosine(37) in tRNA + dimethylallyl diphosphate = N(6)-dimethylallyladenosine(37) in tRNA + diphosphate. Functionally, catalyzes the transfer of a dimethylallyl group onto the adenine at position 37 in tRNAs that read codons beginning with uridine, leading to the formation of N6-(dimethylallyl)adenosine (i(6)A). This Ruthia magnifica subsp. Calyptogena magnifica protein is tRNA dimethylallyltransferase.